A 777-amino-acid chain; its full sequence is C6 finger domain transcription factor adaR (777 aa).

A disordered region spans residues 1–20 (MEQRSSPARSLPPRKTTTTP). The segment at residues 24 to 50 (CELCRKRKVKCDKLTPCTNCAASGTVC) is a DNA-binding region (zn(2)-C6 fungal-type). Disordered regions lie at residues 61–85 (GRHA…TDRI), 111–144 (NSHS…NPNT), 182–213 (SSLA…VLGL), 419–440 (PQHI…PNRE), 468–496 (RKVD…DPSW), and 655–699 (LPPS…PTGS). Over residues 475 to 489 (PTPTSSTSGTSTSRS) the composition is skewed to low complexity. Over residues 668–677 (ATPPTFPGVP) the composition is skewed to pro residues.

The protein localises to the nucleus. In terms of biological role, transcription factor that specifically regulates the expression of the ada gene cluster involved in the biosynthesis of the linear tetracyclic TAN-1612 neuropeptide Y receptor antagonist. The protein is C6 finger domain transcription factor adaR of Aspergillus niger (strain ATCC MYA-4892 / CBS 513.88 / FGSC A1513).